Reading from the N-terminus, the 326-residue chain is WD repeat-containing protein slr1409 (326 aa).

WD repeat units follow at residues 47-77 (GSDV…TLWT), 88-118 (GQKP…RLWN), 129-159 (PHRA…KIFT), 169-199 (LKSG…HLIN), 210-240 (TGQG…KLWN), and 252-282 (VPTG…RFWQ).

In Synechocystis sp. (strain ATCC 27184 / PCC 6803 / Kazusa), this protein is WD repeat-containing protein slr1409.